Here is a 140-residue protein sequence, read N- to C-terminus: Nucleoside diphosphate kinase (140 aa).

Positions 11, 59, 87, 93, 104, and 114 each coordinate ATP. Residue H117 is the Pros-phosphohistidine intermediate of the active site.

It belongs to the NDK family. In terms of assembly, homotetramer. Mg(2+) is required as a cofactor.

The protein localises to the cytoplasm. The catalysed reaction is a 2'-deoxyribonucleoside 5'-diphosphate + ATP = a 2'-deoxyribonucleoside 5'-triphosphate + ADP. The enzyme catalyses a ribonucleoside 5'-diphosphate + ATP = a ribonucleoside 5'-triphosphate + ADP. Its function is as follows. Major role in the synthesis of nucleoside triphosphates other than ATP. The ATP gamma phosphate is transferred to the NDP beta phosphate via a ping-pong mechanism, using a phosphorylated active-site intermediate. The sequence is that of Nucleoside diphosphate kinase from Methylocella silvestris (strain DSM 15510 / CIP 108128 / LMG 27833 / NCIMB 13906 / BL2).